The sequence spans 123 residues: Small ribosomal subunit protein uS12 (123 aa).

Aspartate 89 is modified (3-methylthioaspartic acid). Residues 100 to 123 (GSLDTSGVKDRKQGRSKYGAKRPK) are disordered. Residues 113–123 (GRSKYGAKRPK) show a composition bias toward basic residues.

It belongs to the universal ribosomal protein uS12 family. In terms of assembly, part of the 30S ribosomal subunit. Contacts proteins S8 and S17. May interact with IF1 in the 30S initiation complex.

Its function is as follows. With S4 and S5 plays an important role in translational accuracy. Functionally, interacts with and stabilizes bases of the 16S rRNA that are involved in tRNA selection in the A site and with the mRNA backbone. Located at the interface of the 30S and 50S subunits, it traverses the body of the 30S subunit contacting proteins on the other side and probably holding the rRNA structure together. The combined cluster of proteins S8, S12 and S17 appears to hold together the shoulder and platform of the 30S subunit. The polypeptide is Small ribosomal subunit protein uS12 (Pseudomonas aeruginosa (strain LESB58)).